Reading from the N-terminus, the 90-residue chain is Movement protein (90 aa).

A helical transmembrane segment spans residues 32–52 (FVFVTFGLLIAVGVAWLAYTL).

It belongs to the mastrevirus movement protein family. In terms of assembly, interacts with the capsid protein (CP). Part of a MP-CP-viral DNA complex.

It is found in the host membrane. Involved in the viral transport within, and between cells. The protein is Movement protein of Wheat dwarf virus (isolate Sweden) (WDV).